The primary structure comprises 118 residues: D-dopachrome decarboxylase (118 aa).

An N-acetylproline modification is found at P2.

It belongs to the MIF family. Homotrimer.

It localises to the cytoplasm. The catalysed reaction is D-dopachrome + H(+) = 5,6-dihydroxyindole + CO2. Its function is as follows. Tautomerization of D-dopachrome with decarboxylation to give 5,6-dihydroxyindole (DHI). In Gallus gallus (Chicken), this protein is D-dopachrome decarboxylase (DDT).